The chain runs to 338 residues: Glycerol-3-phosphate dehydrogenase [NAD(P)+] (338 aa).

The NADPH site is built by Ser-13, Trp-14, and Lys-108. Positions 108, 139, and 141 each coordinate sn-glycerol 3-phosphate. Residue Ala-143 participates in NADPH binding. Residues Lys-194, Asp-247, Ser-257, Arg-258, and Asn-259 each coordinate sn-glycerol 3-phosphate. Lys-194 serves as the catalytic Proton acceptor. Residue Arg-258 coordinates NADPH. NADPH contacts are provided by Val-282 and Glu-284.

This sequence belongs to the NAD-dependent glycerol-3-phosphate dehydrogenase family.

Its subcellular location is the cytoplasm. The catalysed reaction is sn-glycerol 3-phosphate + NAD(+) = dihydroxyacetone phosphate + NADH + H(+). It catalyses the reaction sn-glycerol 3-phosphate + NADP(+) = dihydroxyacetone phosphate + NADPH + H(+). The protein operates within membrane lipid metabolism; glycerophospholipid metabolism. In terms of biological role, catalyzes the reduction of the glycolytic intermediate dihydroxyacetone phosphate (DHAP) to sn-glycerol 3-phosphate (G3P), the key precursor for phospholipid synthesis. In Streptococcus suis (strain 98HAH33), this protein is Glycerol-3-phosphate dehydrogenase [NAD(P)+].